The primary structure comprises 46 residues: EELPDSKDRAXPLSASKXISPYMKEAIPMSIPPVIDFNKPFLIIXY.

Ser30 is subject to Phosphoserine.

This sequence belongs to the serpin family. Post-translationally, N-glycosylated; contains bi- and triantennary glycans with a bisecting N-acetylglucosamine and fucose residue. In terms of tissue distribution, plasma.

It is found in the secreted. The protein is Alpha-1-antiproteinase of Notamacropus eugenii (Tammar wallaby).